The following is a 283-amino-acid chain: Pantothenate synthetase (283 aa).

An ATP-binding site is contributed by M31–H38. H38 functions as the Proton donor in the catalytic mechanism. Residue Q62 participates in (R)-pantoate binding. Q62 serves as a coordination point for beta-alanine. G148–D151 is an ATP binding site. Residue Q154 participates in (R)-pantoate binding. Residues I177 and K185–R188 each bind ATP.

The protein belongs to the pantothenate synthetase family. In terms of assembly, homodimer.

Its subcellular location is the cytoplasm. The catalysed reaction is (R)-pantoate + beta-alanine + ATP = (R)-pantothenate + AMP + diphosphate + H(+). Its pathway is cofactor biosynthesis; (R)-pantothenate biosynthesis; (R)-pantothenate from (R)-pantoate and beta-alanine: step 1/1. Catalyzes the condensation of pantoate with beta-alanine in an ATP-dependent reaction via a pantoyl-adenylate intermediate. The polypeptide is Pantothenate synthetase (Oceanobacillus iheyensis (strain DSM 14371 / CIP 107618 / JCM 11309 / KCTC 3954 / HTE831)).